Here is an 854-residue protein sequence, read N- to C-terminus: Putative Tricorn-like protease C-terminal subunit (854 aa).

His-539 serves as the catalytic Charge relay system. Residues 554–646 (PIGGLGADYE…RVTVKLLKDE (93 aa)) are PDZ-like. Gly-709 contacts substrate. Ser-756 acts as the Nucleophile in catalysis. The active-site Charge relay system is the Glu-814.

The protein belongs to the peptidase S41B family.

It localises to the cytoplasm. Degrades oligopeptides in a sequential manner. This is Putative Tricorn-like protease C-terminal subunit (triC) from Sulfurisphaera tokodaii (strain DSM 16993 / JCM 10545 / NBRC 100140 / 7) (Sulfolobus tokodaii).